The following is a 185-amino-acid chain: Ribosome-recycling factor (185 aa).

Belongs to the RRF family.

The protein localises to the cytoplasm. Its function is as follows. Responsible for the release of ribosomes from messenger RNA at the termination of protein biosynthesis. May increase the efficiency of translation by recycling ribosomes from one round of translation to another. This is Ribosome-recycling factor from Tolumonas auensis (strain DSM 9187 / NBRC 110442 / TA 4).